Here is a 784-residue protein sequence, read N- to C-terminus: Rabenosyn-5 (784 aa).

Ala-2 carries the post-translational modification N-acetylalanine. Ser-3 is modified (phosphoserine). The C2H2-type zinc finger occupies 14–37; it reads FLCPLCLKDLQSFYQLHSHYEEEH. The segment at 100–263 is necessary for the correct targeting to endosomes; it reads RSHLSDFKKH…HCKDTLLKRE (164 aa). The segment at 157–260 adopts an FYVE-type zinc-finger fold; the sequence is DQDVPFCPDC…CCTHCKDTLL (104 aa). Positions 163, 166, 179, 182, 187, and 190 each coordinate Zn(2+). Residues 207 to 224 are compositionally biased toward polar residues; it reads KESLSTHTSPSQSPNSVH. The tract at residues 207–241 is disordered; the sequence is KESLSTHTSPSQSPNSVHGSRRGSISSMSSVSSVL. Ser-215, Ser-219, Ser-226, and Ser-230 each carry phosphoserine. The span at 228-240 shows a compositional bias: low complexity; sequence RGSISSMSSVSSV. Residues Cys-252 and Cys-255 each contribute to the Zn(2+) site. The necessary for interaction with RAB4A stretch occupies residues 264–500; sequence QQIDEKEHTP…QLQDEYDQQQ (237 aa). The interval 264-784 is necessary for interaction with EHD1; sequence QQIDEKEHTP…TLAKQKGGTD (521 aa). 2 coiled-coil regions span residues 378–414 and 472–531; these read TKEQFEELKKKRKEEMERKRAVERQAALESQRRLEER and QAKA…RELE. The segment covering 390-400 has biased composition (basic and acidic residues); that stretch reads KEEMERKRAVE. The segment at 390-429 is disordered; it reads KEEMERKRAVERQAALESQRRLEERQSGLASRAANGEVAS. Residues 496-515 enclose the UIM domain; that stretch reads YDQQQTEKAIELSRRQAEEE. Positions 574–732 are disordered; it reads DLGSSPVPSS…DSDSGPEAEE (159 aa). Polar residues predominate over residues 579–598; sequence PVPSSTAPKTPSLSSTQPTR. The necessary for interaction with RAB5A stretch occupies residues 627-784; it reads PFDEEDLSSP…TLAKQKGGTD (158 aa). Residues 663–673 show a composition bias toward acidic residues; sequence PFEEEDEEEEA. Ser-684 carries the phosphoserine modification. Over residues 722–732 the composition is skewed to acidic residues; it reads MDSDSGPEAEE.

Interacts with EHD1, RAB4A, RAB5A, RAB14, RAB22A, RAB24 and VPS45. Binds simultaneously to RAB4A and RAB5A in vitro. Interacts with RAB4A and RAB5A that has been activated by GTP binding.

The protein resides in the cell membrane. It localises to the early endosome membrane. Its function is as follows. Rab4/Rab5 effector protein acting in early endocytic membrane fusion and membrane trafficking of recycling endosomes. Required for endosome fusion either homotypically or with clathrin coated vesicles. Plays a role in the lysosomal trafficking of CTSD/cathepsin D from the Golgi to lysosomes. Also promotes the recycling of transferrin directly from early endosomes to the plasma membrane. Binds phospholipid vesicles containing phosphatidylinositol 3-phosphate (PtdInsP3). Plays a role in the recycling of transferrin receptor to the plasma membrane. The sequence is that of Rabenosyn-5 from Homo sapiens (Human).